The sequence spans 330 residues: Phosphate acyltransferase (330 aa).

This sequence belongs to the PlsX family. As to quaternary structure, homodimer. Probably interacts with PlsY.

It localises to the cytoplasm. The catalysed reaction is a fatty acyl-[ACP] + phosphate = an acyl phosphate + holo-[ACP]. It participates in lipid metabolism; phospholipid metabolism. In terms of biological role, catalyzes the reversible formation of acyl-phosphate (acyl-PO(4)) from acyl-[acyl-carrier-protein] (acyl-ACP). This enzyme utilizes acyl-ACP as fatty acyl donor, but not acyl-CoA. The polypeptide is Phosphate acyltransferase (Lysinibacillus sphaericus (strain C3-41)).